We begin with the raw amino-acid sequence, 837 residues long: Periplasmic nitrate reductase (837 aa).

The segment at residues 1–32 (MTSPKLDRRQMLKLEAAAIAAAAAGLPVPALA) is a signal peptide (tat-type signal). The region spanning 44-100 (LKWDKAACRFCGTGCSVMVATKENRVVATHGDIKAEVNRGLNCVKGYFLSKIMYGHD) is the 4Fe-4S Mo/W bis-MGD-type domain. [4Fe-4S] cluster is bound by residues C51, C54, C58, and C86. Mo-bis(molybdopterin guanine dinucleotide) contacts are provided by residues K88, Q155, N180, C184, 217–224 (WGSNMAEM), 248–252 (STFEH), 267–269 (QTD), M378, Q382, N488, 514–515 (SD), K537, D564, and 724–733 (TGRVLEHWHS). W800 contacts substrate. The Mo-bis(molybdopterin guanine dinucleotide) site is built by N808 and K825.

It belongs to the prokaryotic molybdopterin-containing oxidoreductase family. NasA/NapA/NarB subfamily. Component of the periplasmic nitrate reductase NapAB complex composed of NapA and NapB. It depends on [4Fe-4S] cluster as a cofactor. Mo-bis(molybdopterin guanine dinucleotide) serves as cofactor. Post-translationally, predicted to be exported by the Tat system. The position of the signal peptide cleavage has not been experimentally proven.

The protein resides in the periplasm. The enzyme catalyses 2 Fe(II)-[cytochrome] + nitrate + 2 H(+) = 2 Fe(III)-[cytochrome] + nitrite + H2O. Functionally, catalytic subunit of the periplasmic nitrate reductase complex NapAB. Receives electrons from NapB and catalyzes the reduction of nitrate to nitrite. The chain is Periplasmic nitrate reductase from Bradyrhizobium diazoefficiens (strain JCM 10833 / BCRC 13528 / IAM 13628 / NBRC 14792 / USDA 110).